We begin with the raw amino-acid sequence, 143 residues long: ATP synthase F(0) complex subunit C2, mitochondrial (143 aa).

A mitochondrion-targeting transit peptide spans M1 to R68. The helical transmembrane segment at V84–Y104 threads the bilayer. K111 bears the N6,N6,N6-trimethyllysine mark. Residues I119–I139 form a helical membrane-spanning segment.

It belongs to the ATPase C chain family. As to quaternary structure, F-type ATPases have 2 components, CF(1) - the catalytic core - and CF(0) - the membrane proton channel. CF(1) has five subunits: alpha(3), beta(3), gamma(1), delta(1), epsilon(1). CF(0) has three main subunits: a, b and c. Interacts with DNAJC30; interaction is direct. Post-translationally, trimethylated by ATPSCKMT at Lys-111. Methylation is required for proper incorporation of the C subunit into the ATP synthase complex and mitochondrial respiration.

Its subcellular location is the mitochondrion membrane. Mitochondrial membrane ATP synthase (F(1)F(0) ATP synthase or Complex V) produces ATP from ADP in the presence of a proton gradient across the membrane which is generated by electron transport complexes of the respiratory chain. F-type ATPases consist of two structural domains, F(1) - containing the extramembraneous catalytic core and F(0) - containing the membrane proton channel, linked together by a central stalk and a peripheral stalk. During catalysis, ATP synthesis in the catalytic domain of F(1) is coupled via a rotary mechanism of the central stalk subunits to proton translocation. Part of the complex F(0) domain. A homomeric c-ring of probably 10 subunits is part of the complex rotary element. This is ATP synthase F(0) complex subunit C2, mitochondrial from Ovis aries (Sheep).